A 195-amino-acid polypeptide reads, in one-letter code: uncharacterized protein (195 aa).

Helical transmembrane passes span 89–106 (SWIS…PLLP), 111–128 (HLPL…VWKR), 149–168 (VKIS…VLLL), and 172–194 (LNAL…FLNI).

The protein resides in the cell membrane. This is an uncharacterized protein from Bacillus subtilis (strain 168).